The following is a 242-amino-acid chain: Orotidine 5'-phosphate decarboxylase (242 aa).

Substrate contacts are provided by residues aspartate 21, lysine 43, 71–80 (DLKFFDVPET), threonine 124, arginine 185, glutamine 195, glycine 215, and arginine 216. Lysine 73 (proton donor) is an active-site residue.

Belongs to the OMP decarboxylase family. Type 1 subfamily. In terms of assembly, homodimer.

The enzyme catalyses orotidine 5'-phosphate + H(+) = UMP + CO2. The protein operates within pyrimidine metabolism; UMP biosynthesis via de novo pathway; UMP from orotate: step 2/2. Functionally, catalyzes the decarboxylation of orotidine 5'-monophosphate (OMP) to uridine 5'-monophosphate (UMP). The chain is Orotidine 5'-phosphate decarboxylase from Methylococcus capsulatus (strain ATCC 33009 / NCIMB 11132 / Bath).